The following is a 133-amino-acid chain: ATP synthase epsilon chain, chloroplastic (133 aa).

This sequence belongs to the ATPase epsilon chain family. F-type ATPases have 2 components, CF(1) - the catalytic core - and CF(0) - the membrane proton channel. CF(1) has five subunits: alpha(3), beta(3), gamma(1), delta(1), epsilon(1). CF(0) has three main subunits: a, b and c.

The protein resides in the plastid. Its subcellular location is the chloroplast thylakoid membrane. Produces ATP from ADP in the presence of a proton gradient across the membrane. The sequence is that of ATP synthase epsilon chain, chloroplastic from Nicotiana sylvestris (Wood tobacco).